A 227-amino-acid chain; its full sequence is PKHD-type hydroxylase Bamb_4192 (227 aa).

The Fe2OG dioxygenase domain maps to 78 to 178 (KVFPPLFNRY…RVASFFWIQS (101 aa)). 3 residues coordinate Fe cation: His-96, Asp-98, and His-159. 2-oxoglutarate is bound at residue Arg-169.

Fe(2+) serves as cofactor. Requires L-ascorbate as cofactor.

This Burkholderia ambifaria (strain ATCC BAA-244 / DSM 16087 / CCUG 44356 / LMG 19182 / AMMD) (Burkholderia cepacia (strain AMMD)) protein is PKHD-type hydroxylase Bamb_4192.